Here is a 358-residue protein sequence, read N- to C-terminus: Src kinase-associated phosphoprotein 2 (358 aa).

2 positions are modified to phosphoserine: serine 6 and serine 9. Residues 60–108 (PQEFQDKGDAEEGDEYDDPFAGPPDTISLASERYDKDDDGPSDGNQFPP) are disordered. Phosphotyrosine is present on tyrosine 75. Serine 87 and serine 90 each carry phosphoserine. Residues 116–219 (FVIKAGYLEK…WVQQLKFILQ (104 aa)) form the PH domain. Phosphotyrosine is present on residues tyrosine 151 and tyrosine 197. A Phosphoserine modification is found at serine 223. The interval 227–293 (PEDEDEKGDL…DSVQHPSGDK (67 aa)) is disordered. A compositionally biased stretch (low complexity) spans 243-253 (PVPVSSPQRSQ). Residues 255–270 (IDDEIYEELPEEEEDT) show a composition bias toward acidic residues. Phosphotyrosine is present on tyrosine 260. Phosphoserine is present on residues serine 272, serine 282, and serine 285. Over residues 274–293 (KMDEQGKGSRDSVQHPSGDK) the composition is skewed to basic and acidic residues. In terms of domain architecture, SH3 spans 296-357 (DYANFYQGLW…PKAYLMEMYD (62 aa)).

Belongs to the SKAP family. As to quaternary structure, interacts with FYB1, which is required for SKAP2 protein stability. Interacts with PTPNS1. Part of a complex consisting of SKAP2, FYB1 and PTPNS1. Part of a complex consisting of SKAP2, FYB1 and LILRB3. Interacts with LAT, GRB2, PTK2B, and PRAM1. May interact with actin. May interact with FYN, HCK and LYN. Interacts with FASLG.

The protein resides in the cytoplasm. May be involved in B-cell and macrophage adhesion processes. In B-cells, may act by coupling the B-cell receptor (BCR) to integrin activation. May play a role in src signaling pathway. In Rattus norvegicus (Rat), this protein is Src kinase-associated phosphoprotein 2 (Skap2).